Reading from the N-terminus, the 416-residue chain is Nuclear hormone receptor family member nhr-59 (416 aa).

The nuclear receptor DNA-binding region spans 17-94 (QTFCQVCGQE…IGMDIQNFQF (78 aa)). 2 consecutive NR C4-type zinc fingers follow at residues 20–40 (CQVC…CRAC) and 57–82 (CKDG…LKKC). Residues 162 to 415 (TRLQKLSSSL…FSHPELVKDV (254 aa)) form the NR LBD domain.

This sequence belongs to the nuclear hormone receptor family.

The protein resides in the nucleus. Orphan nuclear receptor. In Caenorhabditis elegans, this protein is Nuclear hormone receptor family member nhr-59.